The sequence spans 382 residues: Anhydro-N-acetylmuramic acid kinase (382 aa).

Position 22–29 (22–29 (GTSMDGVD)) interacts with ATP.

Belongs to the anhydro-N-acetylmuramic acid kinase family.

It carries out the reaction 1,6-anhydro-N-acetyl-beta-muramate + ATP + H2O = N-acetyl-D-muramate 6-phosphate + ADP + H(+). Its pathway is amino-sugar metabolism; 1,6-anhydro-N-acetylmuramate degradation. It functions in the pathway cell wall biogenesis; peptidoglycan recycling. Its function is as follows. Catalyzes the specific phosphorylation of 1,6-anhydro-N-acetylmuramic acid (anhMurNAc) with the simultaneous cleavage of the 1,6-anhydro ring, generating MurNAc-6-P. Is required for the utilization of anhMurNAc either imported from the medium or derived from its own cell wall murein, and thus plays a role in cell wall recycling. The chain is Anhydro-N-acetylmuramic acid kinase from Burkholderia orbicola (strain AU 1054).